A 397-amino-acid chain; its full sequence is Xylose isomerase (397 aa).

Residues H54 and D57 contribute to the active site. Positions 181, 217, 220, 245, 255, 257, and 293 each coordinate Mg(2+).

The protein belongs to the xylose isomerase family. As to quaternary structure, homotetramer. Requires Mg(2+) as cofactor.

It is found in the cytoplasm. It carries out the reaction alpha-D-xylose = alpha-D-xylulofuranose. This Clavibacter michiganensis subsp. michiganensis (strain NCPPB 382) protein is Xylose isomerase.